The chain runs to 293 residues: Homoserine kinase (293 aa).

Residue 83–93 participates in ATP binding; that stretch reads PITRGMGSSSA.

Belongs to the GHMP kinase family. Homoserine kinase subfamily.

It localises to the cytoplasm. It catalyses the reaction L-homoserine + ATP = O-phospho-L-homoserine + ADP + H(+). Its pathway is amino-acid biosynthesis; L-threonine biosynthesis; L-threonine from L-aspartate: step 4/5. Catalyzes the ATP-dependent phosphorylation of L-homoserine to L-homoserine phosphate. The sequence is that of Homoserine kinase from Helicobacter pylori (strain ATCC 700392 / 26695) (Campylobacter pylori).